The primary structure comprises 231 residues: DNA damage response protein C (231 aa).

As to quaternary structure, homodimer.

It localises to the cytoplasm. Its subcellular location is the nucleoid. In terms of biological role, appears to contribute to D.radiodurans capacity to survive exposure to ionizing radiation. Likely functions as a DNA damage-induced nucleoid-associated protein (NAP) that contributes to the enhanced level of nucleoid compaction after irradiation by bridging DNA duplexes, thereby limiting the dispersion of the fragmented genome immediately after irradiation to facilitate subsequent DNA repair. In vitro, binds both ssDNA and dsDNA, and is able to compact circular DNA, circularize linear DNA, anneal complementary DNA strands and protect DNA from nucleases. The protein is DNA damage response protein C of Deinococcus radiodurans (strain ATCC 13939 / DSM 20539 / JCM 16871 / CCUG 27074 / LMG 4051 / NBRC 15346 / NCIMB 9279 / VKM B-1422 / R1).